A 114-amino-acid chain; its full sequence is MSISLLCCAAFPLLWAGPVNAGVTQTPKFRILKIGQSMTLQCAQDMNHNYMYWYRQDPGMGLKLIYYSVGAGITDKGEVPNGYNVSRSTTEDFPLRLELAAPSQTSVYFCASSY.

An N-terminal signal peptide occupies residues 1 to 21 (MSISLLCCAAFPLLWAGPVNA). Positions 22-114 (GVTQTPKFRI…TSVYFCASSY (93 aa)) constitute an Ig-like domain. An intrachain disulfide couples Cys-42 to Cys-110. Residue Asn-84 is glycosylated (N-linked (GlcNAc...) asparagine).

In terms of assembly, alpha-beta TR is a heterodimer composed of an alpha and beta chain; disulfide-linked. The alpha-beta TR is associated with the transmembrane signaling CD3 coreceptor proteins to form the TR-CD3 (TcR or TCR). The assembly of alpha-beta TR heterodimers with CD3 occurs in the endoplasmic reticulum where a single alpha-beta TR heterodimer associates with one CD3D-CD3E heterodimer, one CD3G-CD3E heterodimer and one CD247 homodimer forming a stable octameric structure. CD3D-CD3E and CD3G-CD3E heterodimers preferentially associate with TR alpha and TR beta chains, respectively. The association of the CD247 homodimer is the last step of TcR assembly in the endoplasmic reticulum and is required for transport to the cell surface.

The protein resides in the cell membrane. Its function is as follows. V region of the variable domain of T cell receptor (TR) beta chain that participates in the antigen recognition. Alpha-beta T cell receptors are antigen specific receptors which are essential to the immune response and are present on the cell surface of T lymphocytes. Recognize peptide-major histocompatibility (MH) (pMH) complexes that are displayed by antigen presenting cells (APC), a prerequisite for efficient T cell adaptive immunity against pathogens. Binding of alpha-beta TR to pMH complex initiates TR-CD3 clustering on the cell surface and intracellular activation of LCK that phosphorylates the ITAM motifs of CD3G, CD3D, CD3E and CD247 enabling the recruitment of ZAP70. In turn ZAP70 phosphorylates LAT, which recruits numerous signaling molecules to form the LAT signalosome. The LAT signalosome propagates signal branching to three major signaling pathways, the calcium, the mitogen-activated protein kinase (MAPK) kinase and the nuclear factor NF-kappa-B (NF-kB) pathways, leading to the mobilization of transcription factors that are critical for gene expression and essential for T cell growth and differentiation. The T cell repertoire is generated in the thymus, by V-(D)-J rearrangement. This repertoire is then shaped by intrathymic selection events to generate a peripheral T cell pool of self-MH restricted, non-autoaggressive T cells. Post-thymic interaction of alpha-beta TR with the pMH complexes shapes TR structural and functional avidity. This chain is T cell receptor beta variable 6-6, found in Homo sapiens (Human).